The following is a 557-amino-acid chain: Urocanate hydratase (557 aa).

The disordered stretch occupies residues 1–20 (MSNPRHNEREVRSPRGDELN). NAD(+) is bound by residues 52–53 (GG), Gln-130, 176–178 (GMG), Glu-196, Arg-201, 242–243 (NA), 263–267 (QTSAH), 273–274 (YL), and Tyr-322. Cys-410 is a catalytic residue. NAD(+) is bound at residue Gly-492.

Belongs to the urocanase family. Requires NAD(+) as cofactor.

The protein localises to the cytoplasm. It carries out the reaction 4-imidazolone-5-propanoate = trans-urocanate + H2O. The protein operates within amino-acid degradation; L-histidine degradation into L-glutamate; N-formimidoyl-L-glutamate from L-histidine: step 2/3. Its function is as follows. Catalyzes the conversion of urocanate to 4-imidazolone-5-propionate. The protein is Urocanate hydratase of Brucella melitensis biotype 2 (strain ATCC 23457).